The sequence spans 372 residues: Sulfate/thiosulfate import ATP-binding protein CysA (372 aa).

The ABC transporter domain maps to 3-237 (IQVQHVTKRF…PATPFVYGFL (235 aa)). 35-42 (GPSGCGKT) provides a ligand contact to ATP.

It belongs to the ABC transporter superfamily. Sulfate/tungstate importer (TC 3.A.1.6) family. As to quaternary structure, the complex is composed of two ATP-binding proteins (CysA), two transmembrane proteins (CysT and CysW) and a solute-binding protein (CysP).

The protein resides in the cell inner membrane. The enzyme catalyses sulfate(out) + ATP + H2O = sulfate(in) + ADP + phosphate + H(+). It catalyses the reaction thiosulfate(out) + ATP + H2O = thiosulfate(in) + ADP + phosphate + H(+). Functionally, part of the ABC transporter complex CysAWTP involved in sulfate/thiosulfate import. Responsible for energy coupling to the transport system. The chain is Sulfate/thiosulfate import ATP-binding protein CysA from Ralstonia nicotianae (strain ATCC BAA-1114 / GMI1000) (Ralstonia solanacearum).